We begin with the raw amino-acid sequence, 219 residues long: Melanoma-associated antigen H1 (219 aa).

Residues 1-13 (MPRGRKSRRRRNA) are compositionally biased toward basic residues. Positions 1-84 (MPRGRKSRRR…QKPSVPRSNF (84 aa)) are disordered. Positions 1–198 (MPRGRKSRRR…KDWPCNYDWD (198 aa)) constitute an MAGE domain. Acidic residues predominate over residues 44–57 (PEDDLSGPEEDPST). The segment covering 58–74 (PEEASTTPEEASSTAQA) has biased composition (low complexity). Tyrosine 195 bears the Phosphotyrosine mark.

The sequence is that of Melanoma-associated antigen H1 (MAGEH1) from Homo sapiens (Human).